Consider the following 309-residue polypeptide: Enoyl-CoA hydratase 2, peroxisomal (309 aa).

Residues 95–96 (HG), Lys-124, 208–213 (DYNPLH), Gly-231, and Phe-261 each bind substrate. A MaoC-like domain is found at 183–295 (PQRQPLTVCE…TKVKERNKTV (113 aa)). Residues 307–309 (SSL) carry the Microbody targeting signal motif.

Ubiquitous.

It is found in the peroxisome. It carries out the reaction a (3R)-3-hydroxyacyl-CoA = a (2E)-enoyl-CoA + H2O. It participates in lipid metabolism; fatty acid beta-oxidation. In terms of biological role, bidirectional monofunctional enoyl-CoA hydratase 2 involved in the degradation of even cis-unsaturated fatty acids. Devoid of 3-hydroxyacyl-CoA dehydrogenase activity. This is Enoyl-CoA hydratase 2, peroxisomal (ECH2) from Arabidopsis thaliana (Mouse-ear cress).